A 198-amino-acid polypeptide reads, in one-letter code: Elongation factor Ts (198 aa).

The tract at residues 82 to 85 is involved in Mg(2+) ion dislocation from EF-Tu; the sequence is TDFV.

Belongs to the EF-Ts family.

The protein resides in the cytoplasm. Functionally, associates with the EF-Tu.GDP complex and induces the exchange of GDP to GTP. It remains bound to the aminoacyl-tRNA.EF-Tu.GTP complex up to the GTP hydrolysis stage on the ribosome. The sequence is that of Elongation factor Ts from Oleidesulfovibrio alaskensis (strain ATCC BAA-1058 / DSM 17464 / G20) (Desulfovibrio alaskensis).